The primary structure comprises 335 residues: Tetraacyldisaccharide 4'-kinase (335 aa).

58–65 serves as a coordination point for ATP; it reads TVGGSGKT.

The protein belongs to the LpxK family.

It carries out the reaction a lipid A disaccharide + ATP = a lipid IVA + ADP + H(+). The protein operates within glycolipid biosynthesis; lipid IV(A) biosynthesis; lipid IV(A) from (3R)-3-hydroxytetradecanoyl-[acyl-carrier-protein] and UDP-N-acetyl-alpha-D-glucosamine: step 6/6. Transfers the gamma-phosphate of ATP to the 4'-position of a tetraacyldisaccharide 1-phosphate intermediate (termed DS-1-P) to form tetraacyldisaccharide 1,4'-bis-phosphate (lipid IVA). The sequence is that of Tetraacyldisaccharide 4'-kinase from Shewanella sp. (strain ANA-3).